Here is a 72-residue protein sequence, read N- to C-terminus: MNNSMINPAITDLLKKVDNRYSLVVVTSKRARQLVDGDEALLESDIVKPVSLAIEEVNDGLISYETIREGIK.

This sequence belongs to the RNA polymerase subunit omega family. As to quaternary structure, the RNAP catalytic core consists of 2 alpha, 1 beta, 1 beta' and 1 omega subunit. When a sigma factor is associated with the core the holoenzyme is formed, which can initiate transcription.

The catalysed reaction is RNA(n) + a ribonucleoside 5'-triphosphate = RNA(n+1) + diphosphate. Functionally, promotes RNA polymerase assembly. Latches the N- and C-terminal regions of the beta' subunit thereby facilitating its interaction with the beta and alpha subunits. This Clostridium tetani (strain Massachusetts / E88) protein is DNA-directed RNA polymerase subunit omega (rpoZ).